Consider the following 224-residue polypeptide: 7-cyano-7-deazaguanine synthase (224 aa).

10-20 lines the ATP pocket; it reads VSGGLDSATVL. Zn(2+)-binding residues include Cys-189, Cys-199, Cys-202, and Cys-205.

It belongs to the QueC family. The cofactor is Zn(2+).

It carries out the reaction 7-carboxy-7-deazaguanine + NH4(+) + ATP = 7-cyano-7-deazaguanine + ADP + phosphate + H2O + H(+). Its pathway is purine metabolism; 7-cyano-7-deazaguanine biosynthesis. Functionally, catalyzes the ATP-dependent conversion of 7-carboxy-7-deazaguanine (CDG) to 7-cyano-7-deazaguanine (preQ(0)). The chain is 7-cyano-7-deazaguanine synthase from Nitrosococcus oceani (strain ATCC 19707 / BCRC 17464 / JCM 30415 / NCIMB 11848 / C-107).